The primary structure comprises 221 residues: Agamous-like MADS-box protein AGL14 (221 aa).

The region spanning 3 to 57 is the MADS-box domain; the sequence is RGKTEMKRIENATSRQVTFSKRRNGLLKKAFELSVLCDAEVALIIFSPRGKLYEF. A K-box domain is found at 87–177; the sequence is SQQSKDETYG…MEKCEMQGRG (91 aa).

As to quaternary structure, interacts with AGL16. As to expression, preferentially expressed in roots. Expressed in lateral root cap, root epidermis, root endodermis, columella of the root meristematic region, the vascular cylinder in differentiated zones of the primary root and in emerged lateral root primordia. Expressed in pollen.

Its subcellular location is the nucleus. Its function is as follows. Transcriptional activator that regulates root development by controlling meristem size and patterning of the root apical meristem. Regulates auxin transport and gradients in the root meristematic cells via direct regulation of the auxin efflux carrier PIN1 and PIN4 gene expression. Binds specifically to the CArG-box DNA sequences in the promoter regions of PIN1 and PIN4 genes. Involved in the regulation of shoot apical meristem (SAM) cell identities and transitions. Promotes flowering transition and participates in flower meristem maintenance and determinacy. Positively regulates TFL1 and WUS expression. Binds directly to the TFL1 regulatory sequences. The chain is Agamous-like MADS-box protein AGL14 from Arabidopsis thaliana (Mouse-ear cress).